We begin with the raw amino-acid sequence, 339 residues long: MRVYYDRDADLNLIKSKKVAIIGYGSQGRAHALNLKDSGAQNVAIALKSGSATAKKAEADGFKVMTVAEAAAWADLMMMATPDELQADIYKAEIAGNIRDGAAIAFAHGLNVHFGLIEPKASVDVVMIAPKGPGHTVRGEYQKGGGVPCLVAVHQDASGNALDLALSYACGVGGGRSGIIETNFKEECETDLFGEQVVLCGGLVELIRAGFETLVEAGYAPEMAYFECLHEVKLIVDLIYEGGIANMNYSISNTAEWGEYVTGPRIITEETKAEMKRVLKDIQTGKFTSEWMQEYRSGAARFKGIRRVNDAHQIEEVGAKLRGMMPWIGKNKLVDKAKN.

The KARI N-terminal Rossmann domain occupies 1–182; the sequence is MRVYYDRDAD…GGGRSGIIET (182 aa). NADP(+)-binding positions include 24–27, lysine 48, serine 51, threonine 53, and 83–86; these read YGSQ and DELQ. Residue histidine 108 is part of the active site. An NADP(+)-binding site is contributed by glycine 134. In terms of domain architecture, KARI C-terminal knotted spans 183-328; it reads NFKEECETDL…AKLRGMMPWI (146 aa). Mg(2+) is bound by residues aspartate 191, glutamate 195, glutamate 227, and glutamate 231. Residue serine 252 coordinates substrate.

It belongs to the ketol-acid reductoisomerase family. Mg(2+) is required as a cofactor.

It catalyses the reaction (2R)-2,3-dihydroxy-3-methylbutanoate + NADP(+) = (2S)-2-acetolactate + NADPH + H(+). It carries out the reaction (2R,3R)-2,3-dihydroxy-3-methylpentanoate + NADP(+) = (S)-2-ethyl-2-hydroxy-3-oxobutanoate + NADPH + H(+). It participates in amino-acid biosynthesis; L-isoleucine biosynthesis; L-isoleucine from 2-oxobutanoate: step 2/4. The protein operates within amino-acid biosynthesis; L-valine biosynthesis; L-valine from pyruvate: step 2/4. Functionally, involved in the biosynthesis of branched-chain amino acids (BCAA). Catalyzes an alkyl-migration followed by a ketol-acid reduction of (S)-2-acetolactate (S2AL) to yield (R)-2,3-dihydroxy-isovalerate. In the isomerase reaction, S2AL is rearranged via a Mg-dependent methyl migration to produce 3-hydroxy-3-methyl-2-ketobutyrate (HMKB). In the reductase reaction, this 2-ketoacid undergoes a metal-dependent reduction by NADPH to yield (R)-2,3-dihydroxy-isovalerate. This chain is Ketol-acid reductoisomerase (NADP(+)), found in Sinorhizobium medicae (strain WSM419) (Ensifer medicae).